Consider the following 242-residue polypeptide: Linker for activation of T-cells family member 1 (242 aa).

Residues 1-4 (MEAD) lie on the Extracellular side of the membrane. The chain crosses the membrane as a helical; Signal-anchor for type III membrane protein span at residues 5 to 28 (ALSPVGLGLLLLPFLVTLLAALCV). 2 S-palmitoyl cysteine lipidation sites follow: cysteine 27 and cysteine 30. The Cytoplasmic segment spans residues 29–242 (RCRELPVSYD…PDYENLQELN (214 aa)). Threonine 40 bears the Phosphothreonine mark. Serine 41, serine 44, serine 87, serine 104, serine 109, and serine 112 each carry phosphoserine. The segment at 78–118 (QPDLLPIPRSPQPLGGSHRMPSSQQNSDDANSVASYENQEP) is disordered. A compositionally biased stretch (polar residues) spans 97–115 (MPSSQQNSDDANSVASYEN). An interaction with PLCG1 region spans residues 136–139 (YLVV). Residue tyrosine 175 is modified to Phosphotyrosine. Interaction with GRB2, GRAP2 and PIK3R1 stretches follow at residues 175–178 (YVNV) and 195–198 (YVNV). Residues 176–242 (VNVPESEESA…PDYENLQELN (67 aa)) are disordered. Phosphoserine occurs at positions 199, 212, and 215. Positions 217-234 (EVEDEGEEEGVDGEEAPD) are enriched in acidic residues. Position 235 is a phosphotyrosine (tyrosine 235).

In terms of assembly, when phosphorylated, interacts directly with the PIK3R1 subunit of phosphoinositide 3-kinase and the SH2 domains of GRB2, GRAP, GRAP2, PLCG1 and PLCG2. Interacts indirectly with CBL, SOS, VAV, and LCP2. Interacts with SHB and SKAP2. Interacts with FCGR1A. Interacts with CLNK. Interacts with GRB2, PLCG1 and THEMIS upon TCR activation in thymocytes. Interacts with THEMIS2. Post-translationally, phosphorylated on tyrosines by ZAP70 upon TCR activation, or by SYK upon other immunoreceptor activation; which leads to the recruitment of multiple signaling molecules. Is one of the most prominently tyrosine-phosphorylated proteins detected following TCR engagement. May be dephosphorylated by PTPRJ. Phosphorylated by ITK leading to the recruitment of VAV1 to LAT-containing complexes. Palmitoylation of Cys-27 and Cys-30 is required for raft targeting and efficient phosphorylation. In terms of processing, phosphorylated on tyrosines by ZAP70 upon TCR activation, or by SYK upon other immunoreceptor activation; which leads to the recruitment of multiple signaling molecules. Is one of the most prominently tyrosine-phosphorylated proteins detected following TCR engagement. May be dephosphorylated by PTPRJ. Phosphorylated by ITK leading to the recruitment of VAV1 to LAT-containing complexes. Post-translationally, 'Lys-63'-linked ubiquitinated by TRAF6. In terms of tissue distribution, expressed in T-cells and mast cells.

Its subcellular location is the cell membrane. In terms of biological role, required for TCR (T-cell antigen receptor)- and pre-TCR-mediated signaling, both in mature T-cells and during their development. Involved in FCGR3 (low affinity immunoglobulin gamma Fc region receptor III)-mediated signaling in natural killer cells and FCER1 (high affinity immunoglobulin epsilon receptor)-mediated signaling in mast cells. Couples activation of these receptors and their associated kinases with distal intracellular events such as mobilization of intracellular calcium stores, PKC activation, MAPK activation or cytoskeletal reorganization through the recruitment of PLCG1, GRB2, GRAP2, and other signaling molecules. The polypeptide is Linker for activation of T-cells family member 1 (Lat) (Mus musculus (Mouse)).